We begin with the raw amino-acid sequence, 314 residues long: 4-hydroxy-3-methylbut-2-enyl diphosphate reductase (314 aa).

C12 is a [4Fe-4S] cluster binding site. H41 and H74 together coordinate (2E)-4-hydroxy-3-methylbut-2-enyl diphosphate. 2 residues coordinate dimethylallyl diphosphate: H41 and H74. Isopentenyl diphosphate contacts are provided by H41 and H74. C96 contacts [4Fe-4S] cluster. H124 serves as a coordination point for (2E)-4-hydroxy-3-methylbut-2-enyl diphosphate. H124 contacts dimethylallyl diphosphate. H124 provides a ligand contact to isopentenyl diphosphate. E126 acts as the Proton donor in catalysis. T167 contacts (2E)-4-hydroxy-3-methylbut-2-enyl diphosphate. [4Fe-4S] cluster is bound at residue C197. The (2E)-4-hydroxy-3-methylbut-2-enyl diphosphate site is built by S225, S226, N227, and S269. S225, S226, N227, and S269 together coordinate dimethylallyl diphosphate. Residues S225, S226, N227, and S269 each contribute to the isopentenyl diphosphate site.

Belongs to the IspH family. It depends on [4Fe-4S] cluster as a cofactor.

The catalysed reaction is isopentenyl diphosphate + 2 oxidized [2Fe-2S]-[ferredoxin] + H2O = (2E)-4-hydroxy-3-methylbut-2-enyl diphosphate + 2 reduced [2Fe-2S]-[ferredoxin] + 2 H(+). It carries out the reaction dimethylallyl diphosphate + 2 oxidized [2Fe-2S]-[ferredoxin] + H2O = (2E)-4-hydroxy-3-methylbut-2-enyl diphosphate + 2 reduced [2Fe-2S]-[ferredoxin] + 2 H(+). The protein operates within isoprenoid biosynthesis; dimethylallyl diphosphate biosynthesis; dimethylallyl diphosphate from (2E)-4-hydroxy-3-methylbutenyl diphosphate: step 1/1. It participates in isoprenoid biosynthesis; isopentenyl diphosphate biosynthesis via DXP pathway; isopentenyl diphosphate from 1-deoxy-D-xylulose 5-phosphate: step 6/6. Catalyzes the conversion of 1-hydroxy-2-methyl-2-(E)-butenyl 4-diphosphate (HMBPP) into a mixture of isopentenyl diphosphate (IPP) and dimethylallyl diphosphate (DMAPP). Acts in the terminal step of the DOXP/MEP pathway for isoprenoid precursor biosynthesis. This is 4-hydroxy-3-methylbut-2-enyl diphosphate reductase from Haemophilus influenzae (strain PittGG).